The sequence spans 384 residues: Substance-K receptor (384 aa).

Residues 1–32 (MGGRAIVTDTNIFSGLESNTTGVTAFSMPAWQ) are Extracellular-facing. N-linked (GlcNAc...) asparagine glycosylation occurs at N19. Residues 33 to 56 (LALWATAYLGLVLVAVTGNATVIW) traverse the membrane as a helical segment. The Cytoplasmic segment spans residues 57–69 (IILAHERMRTVTN). The helical transmembrane segment at 70-90 (YFIINLALADLCMAAFNATFN) threads the bilayer. Topologically, residues 91 to 107 (FVYASHNIWYFGRAFCY) are extracellular. Cysteines 106 and 181 form a disulfide. The helical transmembrane segment at 108-129 (FQNLFPITAMFVSIYSMTAIAA) threads the bilayer. Residues 130 to 149 (DRYMAIVHPFQPRLSAPITK) are Cytoplasmic-facing. Residues 150-170 (ATIAGIWLVALALASPQCFYS) form a helical membrane-spanning segment. Residues 171–196 (TITVDQGATKCVVAWPNDNGGKMLLL) are Extracellular-facing. Residues 197–218 (YHLVVFVLVYFLPLVVMFVAYS) traverse the membrane as a helical segment. At 219-251 (VIGLTLWKRAVPRHQAHGANLRHLHAKKKFVKA) the chain is on the cytoplasmic side. A helical transmembrane segment spans residues 252–272 (MVLVVLTFAICWLPYHLYFIL). Residues 273–290 (GSFQKDIYYRKFIQQVYL) are Extracellular-facing. Residues 291-310 (ALFWLAMSSTMYNPIIYCCL) form a helical membrane-spanning segment. At 311 to 384 (NHRFRSGFRL…SPQDVEPAAP (74 aa)) the chain is on the cytoplasmic side. C324 carries S-palmitoyl cysteine lipidation.

This sequence belongs to the G-protein coupled receptor 1 family.

Its subcellular location is the cell membrane. Functionally, this is a receptor for the tachykinin neuropeptide substance K (neurokinin A). It is associated with G proteins that activate a phosphatidylinositol-calcium second messenger system. The rank order of affinity of this receptor to tachykinins is: substance K &gt; neuromedin-K &gt; substance P. In Mesocricetus auratus (Golden hamster), this protein is Substance-K receptor (TACR2).